We begin with the raw amino-acid sequence, 180 residues long: ADP-ribosylation factor-like protein 1 (180 aa).

Residue Gly-2 is the site of N-myristoyl glycine attachment. Residues 23–30, 66–70, and 125–128 each bind GTP; these read GLDGAGKT, DLGGQ, and NKQD.

It belongs to the small GTPase superfamily. Arf family. As to expression, expressed in neuronal cells. Expression in hypodermal tissues is absent.

It is found in the golgi apparatus. Its subcellular location is the cytoplasm. The protein resides in the cytoplasmic granule. Its function is as follows. GTP-binding protein that may be involved in protein trafficking; may modulate vesicle budding and uncoating within the Golgi apparatus. Plays a role in male tail tip morphogenesis. The chain is ADP-ribosylation factor-like protein 1 from Caenorhabditis elegans.